The following is a 374-amino-acid chain: O-methyltransferase acrG (374 aa).

S-adenosyl-L-homocysteine is bound by residues Tyr-19, Asn-70, Asp-96, Ser-128, and Phe-129. Phe-245 is a binding site for Mg(2+).

Belongs to the methyltransferase superfamily. Type-7 methyltransferase family.

It participates in secondary metabolite biosynthesis. In terms of biological role, O-methyltransferase; part of the cluster that mediates the biosynthesis of acurin A, a highly reduced polyketide coupled to a serine via a peptide bond. The activities of the highly reducing polyketide synthase acrA and the nonribosomal peptide synthetase acrB are collectively responsible for the synthesis of the acurin A core structure with a heptaketide backbone produced by acrA covalently fused to a L-serine by acrB. After the formation of the PK-NRP hybrid product, it is detached from acrB by reductive release to set up the formation of the lactam ring by aldol condensation. The hydrolyase acrC then catalyzes water loss to generate a double bond in the ring. This double bond is probably reduced, which is followed by three oxidations at C-22 to generate the carboxylic acid moiety, involving probably the FAD-binding monooxygenase acrE and the cytochrome P450 monooxygenases acrD and acrF. Finally, a last methylation step performed by the O-methyltransferase acrG leads to the production of acurin A. The protein is O-methyltransferase acrG of Aspergillus aculeatus (strain ATCC 16872 / CBS 172.66 / WB 5094).